The sequence spans 433 residues: Small ribosomal subunit biogenesis GTPase RsgA 1, mitochondrial (433 aa).

The interval 1–20 is disordered; the sequence is MLRAKHIGKNYSSSLSPVLS. The 179-residue stretch at 113 to 291 folds into the CP-type G domain; the sequence is SEILDPPVAN…LADTPGFNQP (179 aa). 212–220 contributes to the GTP binding site; that stretch reads GPSGVGKSS. Residues Cys-317, Cys-322, His-324, and Cys-330 each coordinate Zn(2+).

It belongs to the TRAFAC class YlqF/YawG GTPase family. RsgA subfamily. In terms of assembly, monomer. Associates with 30S ribosomal subunit, binds 16S rRNA. Zn(2+) serves as cofactor.

The protein resides in the mitochondrion. Its function is as follows. One of several proteins that assist in the late maturation steps of the functional core of the 30S ribosomal subunit. Helps release RbfA from mature subunits. May play a role in the assembly of ribosomal proteins into the subunit. Circularly permuted GTPase that catalyzes slow GTP hydrolysis, GTPase activity is stimulated by the 30S ribosomal subunit. Required for embryo development. This chain is Small ribosomal subunit biogenesis GTPase RsgA 1, mitochondrial, found in Arabidopsis thaliana (Mouse-ear cress).